The sequence spans 400 residues: tRNA-specific 2-thiouridylase MnmA (400 aa).

Residues 19 to 26 (AMSGGVDS) and Leu45 contribute to the ATP site. The active-site Nucleophile is the Cys113. Cys113 and Cys210 are oxidised to a cystine. Residue Gly137 participates in ATP binding. The interval 160 to 162 (RDQ) is interaction with tRNA. The active-site Cysteine persulfide intermediate is Cys210.

The protein belongs to the MnmA/TRMU family.

The protein localises to the cytoplasm. The enzyme catalyses S-sulfanyl-L-cysteinyl-[protein] + uridine(34) in tRNA + AH2 + ATP = 2-thiouridine(34) in tRNA + L-cysteinyl-[protein] + A + AMP + diphosphate + H(+). Its function is as follows. Catalyzes the 2-thiolation of uridine at the wobble position (U34) of tRNA, leading to the formation of s(2)U34. In Nitrobacter winogradskyi (strain ATCC 25391 / DSM 10237 / CIP 104748 / NCIMB 11846 / Nb-255), this protein is tRNA-specific 2-thiouridylase MnmA.